The sequence spans 360 residues: DNA replication and repair protein RecF (360 aa).

33 to 40 (GENGSGKT) lines the ATP pocket.

This sequence belongs to the RecF family.

It localises to the cytoplasm. Its function is as follows. The RecF protein is involved in DNA metabolism; it is required for DNA replication and normal SOS inducibility. RecF binds preferentially to single-stranded, linear DNA. It also seems to bind ATP. The sequence is that of DNA replication and repair protein RecF from Rickettsia canadensis (strain McKiel).